The sequence spans 276 residues: UPF0276 protein CV_3513 (276 aa).

This sequence belongs to the UPF0276 family.

The chain is UPF0276 protein CV_3513 from Chromobacterium violaceum (strain ATCC 12472 / DSM 30191 / JCM 1249 / CCUG 213 / NBRC 12614 / NCIMB 9131 / NCTC 9757 / MK).